Here is a 326-residue protein sequence, read N- to C-terminus: MPELNTARGPIDTADLGVTLMHEHVFIMTTEIAQNYPEAWGDEDKRVAGAIARLGELKARGVDTIVDLTVIGLGRYIPRIARVAAATELNIVVATGLYTYNDVPFYFHYLGPGAQLDGPEIMTDMFVRDIEHGIADTGIKAGILKCATDEPGLTPGVERVLRAVAQAHKRTGAPISTHTHAGLRRGLDQQRIFAEEGVDLSRVVIGHCGDSTDVGYLEELIAAGSYLGMDRFGVDVISPFQDRVNIVARMCERGHADKMVLSHDACCYFDALPEELVPVAMPNWHYLHIHNDVIPALKQHGVTDEQLHTMLVDNPRRIFERQGGYQ.

Residues H22, H24, K145, H178, H207, and D264 each coordinate Zn(2+). K145 is subject to N6-carboxylysine.

This sequence belongs to the metallo-dependent hydrolases superfamily. Phosphotriesterase family. Zn(2+) is required as a cofactor.

The chain is Phosphotriesterase homology protein (php) from Mycobacterium tuberculosis (strain CDC 1551 / Oshkosh).